We begin with the raw amino-acid sequence, 807 residues long: Enhancer of polycomb homolog 2 (807 aa).

Glycyl lysine isopeptide (Lys-Gly) (interchain with G-Cter in SUMO2) cross-links involve residues lysine 135, lysine 195, lysine 324, and lysine 362. A disordered region spans residues aspartate 376 to glycine 396. Serine 538 is modified (phosphoserine). Residues glutamine 600–glutamine 613 show a composition bias toward low complexity. Disordered regions lie at residues glutamine 600 to serine 628 and serine 645 to glycine 673. 2 stretches are compositionally biased toward polar residues: residues threonine 614 to serine 628 and glutamate 657 to glycine 673. Phosphoserine is present on serine 754.

The protein belongs to the enhancer of polycomb family.

The protein resides in the nucleus. May play a role in transcription or DNA repair. This is Enhancer of polycomb homolog 2 (EPC2) from Homo sapiens (Human).